Here is a 309-residue protein sequence, read N- to C-terminus: Ribose-phosphate pyrophosphokinase (309 aa).

Residues 37 to 39 (DGE) and 96 to 97 (RQ) each bind ATP. Residues His130 and Asp169 each coordinate Mg(2+). The active site involves Lys192. Residues Arg194, Asp218, and 222–226 (DTAGT) contribute to the D-ribose 5-phosphate site.

It belongs to the ribose-phosphate pyrophosphokinase family. Class I subfamily. In terms of assembly, homohexamer. Mg(2+) is required as a cofactor.

It is found in the cytoplasm. The catalysed reaction is D-ribose 5-phosphate + ATP = 5-phospho-alpha-D-ribose 1-diphosphate + AMP + H(+). It functions in the pathway metabolic intermediate biosynthesis; 5-phospho-alpha-D-ribose 1-diphosphate biosynthesis; 5-phospho-alpha-D-ribose 1-diphosphate from D-ribose 5-phosphate (route I): step 1/1. Its function is as follows. Involved in the biosynthesis of the central metabolite phospho-alpha-D-ribosyl-1-pyrophosphate (PRPP) via the transfer of pyrophosphoryl group from ATP to 1-hydroxyl of ribose-5-phosphate (Rib-5-P). The sequence is that of Ribose-phosphate pyrophosphokinase from Campylobacter jejuni subsp. jejuni serotype O:2 (strain ATCC 700819 / NCTC 11168).